The chain runs to 342 residues: Methylthioribose-1-phosphate isomerase (342 aa).

Residues 44–46 (RGA), R85, and Q192 contribute to the substrate site. D233 (proton donor) is an active-site residue. Substrate is bound at residue 243–244 (NK).

Belongs to the eIF-2B alpha/beta/delta subunits family. MtnA subfamily.

It catalyses the reaction 5-(methylsulfanyl)-alpha-D-ribose 1-phosphate = 5-(methylsulfanyl)-D-ribulose 1-phosphate. It participates in amino-acid biosynthesis; L-methionine biosynthesis via salvage pathway; L-methionine from S-methyl-5-thio-alpha-D-ribose 1-phosphate: step 1/6. In terms of biological role, catalyzes the interconversion of methylthioribose-1-phosphate (MTR-1-P) into methylthioribulose-1-phosphate (MTRu-1-P). The protein is Methylthioribose-1-phosphate isomerase of Caldicellulosiruptor saccharolyticus (strain ATCC 43494 / DSM 8903 / Tp8T 6331).